A 182-amino-acid chain; its full sequence is Doublesex- and mab-3-related transcription factor C1 (182 aa).

Thr15 carries the post-translational modification Phosphoserine. A compositionally biased stretch (polar residues) spans 26–39 (AQVDTATQEESSQG). 2 disordered regions span residues 26 to 48 (AQVD…QHPE) and 136 to 174 (QTRH…PSGH).

It belongs to the DMRT family. As to expression, expressed in Sertoli cells in male testis.

The chain is Doublesex- and mab-3-related transcription factor C1 (Dmrtc1) from Mus musculus (Mouse).